We begin with the raw amino-acid sequence, 441 residues long: Tol-Pal system protein TolB (441 aa).

The first 23 residues, 1–23 (MRNAIATVLLGLAMLLPVGAVQA), serve as a signal peptide directing secretion. The interval 420 to 441 (RNLKPVKTPDGASDPSWSPLQN) is disordered.

The protein belongs to the TolB family. As to quaternary structure, the Tol-Pal system is composed of five core proteins: the inner membrane proteins TolA, TolQ and TolR, the periplasmic protein TolB and the outer membrane protein Pal. They form a network linking the inner and outer membranes and the peptidoglycan layer.

It is found in the periplasm. In terms of biological role, part of the Tol-Pal system, which plays a role in outer membrane invagination during cell division and is important for maintaining outer membrane integrity. The polypeptide is Tol-Pal system protein TolB (Ruegeria sp. (strain TM1040) (Silicibacter sp.)).